The primary structure comprises 472 residues: Adenosylhomocysteinase (472 aa).

Threonine 60, aspartate 136, and glutamate 197 together coordinate substrate. 198 to 200 serves as a coordination point for NAD(+); that stretch reads TTT. Substrate-binding residues include lysine 227 and aspartate 231. Residues asparagine 232, 261 to 266, glutamate 284, asparagine 319, 340 to 342, and asparagine 388 each bind NAD(+); these read GYGDVG and IGH.

It belongs to the adenosylhomocysteinase family. The cofactor is NAD(+).

The protein resides in the cytoplasm. It carries out the reaction S-adenosyl-L-homocysteine + H2O = L-homocysteine + adenosine. Its pathway is amino-acid biosynthesis; L-homocysteine biosynthesis; L-homocysteine from S-adenosyl-L-homocysteine: step 1/1. Functionally, may play a key role in the regulation of the intracellular concentration of adenosylhomocysteine. This Maridesulfovibrio salexigens (strain ATCC 14822 / DSM 2638 / NCIMB 8403 / VKM B-1763) (Desulfovibrio salexigens) protein is Adenosylhomocysteinase.